The sequence spans 232 residues: V-type ATP synthase subunit E (232 aa).

This sequence belongs to the V-ATPase E subunit family.

Produces ATP from ADP in the presence of a proton gradient across the membrane. The chain is V-type ATP synthase subunit E (atpE) from Treponema pallidum (strain Nichols).